The sequence spans 131 residues: Glycine cleavage system H protein (131 aa).

In terms of domain architecture, Lipoyl-binding spans 24 to 106; sequence IATIGISAFA…YGEGWLLKLR (83 aa). Lys65 bears the N6-lipoyllysine mark.

It belongs to the GcvH family. As to quaternary structure, the glycine cleavage system is composed of four proteins: P, T, L and H. It depends on (R)-lipoate as a cofactor.

Functionally, the glycine cleavage system catalyzes the degradation of glycine. The H protein shuttles the methylamine group of glycine from the P protein to the T protein. The chain is Glycine cleavage system H protein from Gloeothece citriformis (strain PCC 7424) (Cyanothece sp. (strain PCC 7424)).